We begin with the raw amino-acid sequence, 82 residues long: RNA-binding protein Hfq (82 aa).

Residues 11–71 form the Sm domain; that stretch reads DTFLNSVRKS…ISTIMPAQPV (61 aa).

Belongs to the Hfq family. As to quaternary structure, homohexamer.

Its function is as follows. RNA chaperone that binds small regulatory RNA (sRNAs) and mRNAs to facilitate mRNA translational regulation in response to envelope stress, environmental stress and changes in metabolite concentrations. Also binds with high specificity to tRNAs. The polypeptide is RNA-binding protein Hfq (Caulobacter sp. (strain K31)).